A 186-amino-acid polypeptide reads, in one-letter code: Transcriptional repressor NrdR (186 aa).

The disordered stretch occupies residues 1–24 (MRCPYCGGLDTQVKDSRPSDDASA). A zinc finger spans residues 3–34 (CPYCGGLDTQVKDSRPSDDASAIRRRRICPDC). Basic and acidic residues predominate over residues 12 to 24 (QVKDSRPSDDASA). Positions 49–139 (LTVVKRSGRR…VYKNFREARD (91 aa)) constitute an ATP-cone domain. Residues 146 to 186 (RLNGAGRPGGEPEPPDEAAPGPAAAPGEGGEAPARRARSRA) form a disordered region.

It belongs to the NrdR family. It depends on Zn(2+) as a cofactor.

Functionally, negatively regulates transcription of bacterial ribonucleotide reductase nrd genes and operons by binding to NrdR-boxes. This is Transcriptional repressor NrdR from Methylobacterium sp. (strain 4-46).